The chain runs to 238 residues: Probable xyloglucan-specific endo-beta-1,4-glucanase A (238 aa).

A signal peptide spans Met-1–Ala-18. N-linked (GlcNAc...) asparagine glycosylation is found at Asn-106 and Asn-171.

Belongs to the glycosyl hydrolase 12 (cellulase H) family.

Its subcellular location is the secreted. The catalysed reaction is xyloglucan + H2O = xyloglucan oligosaccharides.. Functionally, catalyzes endohydrolysis of 1,4-beta-D-glucosidic linkages in xyloglucan with retention of the beta-configuration of the glycosyl residues. Specific for xyloglucan and does not hydrolyze other cell wall components. This Neosartorya fischeri (strain ATCC 1020 / DSM 3700 / CBS 544.65 / FGSC A1164 / JCM 1740 / NRRL 181 / WB 181) (Aspergillus fischerianus) protein is Probable xyloglucan-specific endo-beta-1,4-glucanase A (xgeA).